We begin with the raw amino-acid sequence, 345 residues long: Hemin transport protein HmuS (345 aa).

To Y.enterocolitica HemS.

Functionally, part of the binding-protein-dependent transport system for hemin. This chain is Hemin transport protein HmuS (hmuS), found in Yersinia pestis.